The chain runs to 440 residues: NK1 transcription factor-related protein 1 (440 aa).

Over residues 1–13 the composition is skewed to low complexity; the sequence is MSTSGPAAPGDVP. Disordered regions lie at residues 1 to 82, 145 to 291, and 342 to 387; these read MSTS…RPTS, GVAA…PRRA, and KWKK…PMGA. Residues 14-31 show a composition bias toward pro residues; that stretch reads ALPPPPPGPGSGPAPPAP. Composition is skewed to low complexity over residues 62–74 and 145–158; these read VPAV…AARP and GVAA…TSAG. Over residues 170 to 181 the composition is skewed to polar residues; the sequence is GYSSGSGRSPTA. A compositionally biased stretch (acidic residues) spans 182-198; sequence DSEDEAPEDEDEEEAPE. Residues 210 to 222 are compositionally biased toward gly residues; the sequence is GGSGGLGARGSGC. Over residues 237–269 the composition is skewed to low complexity; the sequence is AAPGPRGNSPGAPGPPATATGAGSAGSTPQGAA. Residues 288-347 constitute a DNA-binding region (homeobox); that stretch reads PRRARTAFTYEQLVALENKFKATRYLSVCERLNLALSLSLTETQVKIWFQNRRTKWKKQN. Positions 356 to 374 are enriched in gly residues; the sequence is TGGGGGPGPGAGPGAGLPG.

Belongs to the NK-1 homeobox family.

It is found in the nucleus. In terms of biological role, may be required for the coordinated crosstalk of factors involved in the maintenance of energy homeostasis, possibly by regulating the transcription of specific factors involved in energy balance. In Mus musculus (Mouse), this protein is NK1 transcription factor-related protein 1.